The sequence spans 101 residues: Phosphoribosyl-AMP cyclohydrolase (101 aa).

Asp-71 lines the Mg(2+) pocket. Cys-72 lines the Zn(2+) pocket. Mg(2+) contacts are provided by Asp-73 and Asp-75. Zn(2+)-binding residues include Cys-88 and Cys-95.

The protein belongs to the PRA-CH family. In terms of assembly, homodimer. The cofactor is Mg(2+). Zn(2+) serves as cofactor.

It is found in the cytoplasm. The enzyme catalyses 1-(5-phospho-beta-D-ribosyl)-5'-AMP + H2O = 1-(5-phospho-beta-D-ribosyl)-5-[(5-phospho-beta-D-ribosylamino)methylideneamino]imidazole-4-carboxamide. It functions in the pathway amino-acid biosynthesis; L-histidine biosynthesis; L-histidine from 5-phospho-alpha-D-ribose 1-diphosphate: step 3/9. In terms of biological role, catalyzes the hydrolysis of the adenine ring of phosphoribosyl-AMP. The polypeptide is Phosphoribosyl-AMP cyclohydrolase (Bacillus cereus (strain Q1)).